Consider the following 756-residue polypeptide: Cholesterol uptake protein 1 (756 aa).

Positions 1–18 (MRTSQAIFILIFLDSVRN) are cleaved as a signal peptide. The Extracellular portion of the chain corresponds to 19–268 (QSPQVIPAKW…TIESSMKIFD (250 aa)). N-linked (GlcNAc...) asparagine glycans are attached at residues asparagine 39 and asparagine 63. The Cholesterol-binding sequence motif signature appears at 124–129 (VHYNFR). 3 N-linked (GlcNAc...) asparagine glycosylation sites follow: asparagine 140, asparagine 174, and asparagine 257. The chain crosses the membrane as a helical span at residues 269 to 289 (YTIPIVFWACILLLVTIVVFV). At 290-373 (YHYFDGIWER…YEERELKYDV (84 aa)) the chain is on the cytoplasmic side. Residues 374–394 (YKIALAIIGIFYNITVLQLII) form a helical membrane-spanning segment. Topologically, residues 395–421 (SKAGSLRQSGDLDECTFNFQCARPLWY) are extracellular. A helical membrane pass occupies residues 422–442 (FVAFNNVVSNGGYVYFGTLII). Residues 443–473 (VMNYCRERSFRRLFAVQPTLAERYGLPQHSG) lie on the Cytoplasmic side of the membrane. Residues 474 to 494 (LMTAIGLAVIMEGISSATYHV) traverse the membrane as a helical segment. Topologically, residues 495–498 (CPNN) are extracellular. The chain crosses the membrane as a helical span at residues 499–517 (INYQFDTALMYVIGMLGKL). The Cytoplasmic portion of the chain corresponds to 518 to 530 (KIWSLRHPDMVVS). The helical transmembrane segment at 531 to 551 (AYHAFGFLGVFLMAAIAGVYV) threads the bilayer. At 552–554 (HNM) the chain is on the extracellular side. The helical transmembrane segment at 555-575 (IFWALFSIIYIASMLLVSLEF) threads the bilayer. Residues 570–578 (LVSLEFYFK) carry the Cholesterol-binding sequence motif motif. Residues 576-612 (YFKGIWTLNLRELRNSIRLSWVSSRHLSCVVPAYKAR) are Cytoplasmic-facing. Residues 613–633 (FFVILLLNIANTAVVVYGLEA) form a helical membrane-spanning segment. Topologically, residues 634–637 (HPKD) are extracellular. The chain crosses the membrane as a helical span at residues 638 to 658 (FLSFLLIPFIGNLFIYIIYYI). The Cytoplasmic portion of the chain corresponds to 659–671 (LMKMIYREKIPKR). Residues 672-692 (AIALLFAAVISWTCAGILFNQ) traverse the membrane as a helical segment. The Extracellular portion of the chain corresponds to 693–728 (RVSDWSKMPAISRELNKPCIFLNFYDNHDLWHLSSA). The helical transmembrane segment at 729–749 (FAIFFSFTAINVIDDDLMFVM) threads the bilayer. At 750–756 (RNTIRVF) the chain is on the cytoplasmic side.

It belongs to the SID1 family. Highly expressed along the intestine with expression also detected in the pharynx, especially at the terminal bulb, and in the excretory gland cells.

It is found in the cell membrane. The enzyme catalyses cholesterol(in) = cholesterol(out). In terms of biological role, cholesterol-binding protein which is involved in dietary cholesterol uptake from the environment. Does not play a role in double-stranded RNA transport in contrast to other SID1 family members. The sequence is that of Cholesterol uptake protein 1 from Caenorhabditis elegans.